The sequence spans 32 residues: FSGLEAAIVLIAFVVVAAVFSYVMLGAGFFAT.

This sequence belongs to the archaeal flagellin family. In terms of processing, glycosylated.

It is found in the archaeal flagellum. Flagellin is the subunit protein which polymerizes to form the filaments of archaeal flagella. This Methanospirillum hungatei protein is 24 kDa flagellin.